Here is a 24-residue protein sequence, read N- to C-terminus: MKWETPTATDLRFGFEITMYVSAR.

The pyrroloquinoline quinone (Glu-Tyr) cross-link spans 16–20 (EITMY).

It belongs to the PqqA family.

The protein operates within cofactor biosynthesis; pyrroloquinoline quinone biosynthesis. In terms of biological role, required for coenzyme pyrroloquinoline quinone (PQQ) biosynthesis. PQQ is probably formed by cross-linking a specific glutamate to a specific tyrosine residue and excising these residues from the peptide. This is Coenzyme PQQ synthesis protein A from Variovorax paradoxus (strain S110).